Reading from the N-terminus, the 346-residue chain is Phosphate acyltransferase (346 aa).

It belongs to the PlsX family. Homodimer. Probably interacts with PlsY.

The protein resides in the cytoplasm. It catalyses the reaction a fatty acyl-[ACP] + phosphate = an acyl phosphate + holo-[ACP]. Its pathway is lipid metabolism; phospholipid metabolism. Its function is as follows. Catalyzes the reversible formation of acyl-phosphate (acyl-PO(4)) from acyl-[acyl-carrier-protein] (acyl-ACP). This enzyme utilizes acyl-ACP as fatty acyl donor, but not acyl-CoA. The protein is Phosphate acyltransferase of Crocosphaera subtropica (strain ATCC 51142 / BH68) (Cyanothece sp. (strain ATCC 51142)).